The following is a 109-amino-acid chain: Small ribosomal subunit protein uS10c (109 aa).

It belongs to the universal ribosomal protein uS10 family. Part of the 30S ribosomal subunit.

The protein resides in the plastid. Its subcellular location is the chloroplast. In terms of biological role, involved in the binding of tRNA to the ribosomes. The protein is Small ribosomal subunit protein uS10c of Cyanidium caldarium (Red alga).